The following is a 418-amino-acid chain: Putative ion-transport protein YfeO (418 aa).

12 helical membrane-spanning segments follow: residues 10 to 30 (LLLS…LIVV), 54 to 74 (DSPF…GLVI), 99 to 119 (ALPG…SLGP), 120 to 140 (EHPI…RLLP), 149 to 169 (ILAS…AALI), 186 to 206 (LFAP…FFHP), 223 to 243 (ILSG…AVWC), 258 to 278 (VLML…AGPV), 300 to 320 (DYFL…ASGF), 322 to 342 (GGRI…LHEH), 343 to 363 (VPAV…VLVV), and 371 to 391 (LFMA…CIVM).

It belongs to the chloride channel (TC 2.A.49) family.

It is found in the cell membrane. This Escherichia coli (strain SMS-3-5 / SECEC) protein is Putative ion-transport protein YfeO.